Consider the following 475-residue polypeptide: Putative UDP-glucose glucosyltransferase (475 aa).

Belongs to the UDP-glycosyltransferase family.

The polypeptide is Putative UDP-glucose glucosyltransferase (Fragaria ananassa (Strawberry)).